The following is a 367-amino-acid chain: Heme A synthase (367 aa).

Helical transmembrane passes span 26–46, 111–131, 139–159, 174–194, and 212–232; these read IRGW…VGGA, LLAR…WVTG, LPLL…WWMV, LATH…IYRG, and AGAI…VAGL. A heme-binding site is contributed by H274. The next 3 membrane-spanning stretches (helical) occupy residues 276 to 296, 305 to 325, and 327 to 347; these read LGAY…LRAA, SVLL…TLLL, and VPIG…GFAI. H335 contributes to the heme binding site.

The protein belongs to the COX15/CtaA family. Type 2 subfamily. As to quaternary structure, interacts with CtaB. It depends on heme b as a cofactor.

It localises to the cell membrane. The enzyme catalyses Fe(II)-heme o + 2 A + H2O = Fe(II)-heme a + 2 AH2. It functions in the pathway porphyrin-containing compound metabolism; heme A biosynthesis; heme A from heme O: step 1/1. Functionally, catalyzes the conversion of heme O to heme A by two successive hydroxylations of the methyl group at C8. The first hydroxylation forms heme I, the second hydroxylation results in an unstable dihydroxymethyl group, which spontaneously dehydrates, resulting in the formyl group of heme A. This is Heme A synthase from Rhizobium meliloti (strain 1021) (Ensifer meliloti).